Here is a 95-residue protein sequence, read N- to C-terminus: ESAT-6-like protein EsxA (95 aa).

It belongs to the WXG100 family. ESAT-6 subfamily. As to quaternary structure, forms a tight 1:1 complex with EsxB.

The polypeptide is ESAT-6-like protein EsxA (Corynebacterium diphtheriae (strain ATCC 700971 / NCTC 13129 / Biotype gravis)).